A 399-amino-acid chain; its full sequence is Coenzyme A biosynthesis bifunctional protein CoaBC (399 aa).

The phosphopantothenoylcysteine decarboxylase stretch occupies residues 1–190 (MQTLAGKKIL…FQPKVLEGKS (190 aa)). Cys159 functions as the Proton donor in the catalytic mechanism. Residues 191-399 (ILISAGPTRE…KILEKMRELM (209 aa)) are phosphopantothenate--cysteine ligase. Residues Asp279, Lys289, 307–310 (PDIV), Phe326, Lys340, and Lys344 contribute to the CTP site.

In the N-terminal section; belongs to the HFCD (homo-oligomeric flavin containing Cys decarboxylase) superfamily. The protein in the C-terminal section; belongs to the PPC synthetase family. Mg(2+) serves as cofactor. It depends on FMN as a cofactor.

It catalyses the reaction N-[(R)-4-phosphopantothenoyl]-L-cysteine + H(+) = (R)-4'-phosphopantetheine + CO2. The catalysed reaction is (R)-4'-phosphopantothenate + L-cysteine + CTP = N-[(R)-4-phosphopantothenoyl]-L-cysteine + CMP + diphosphate + H(+). It functions in the pathway cofactor biosynthesis; coenzyme A biosynthesis; CoA from (R)-pantothenate: step 2/5. Its pathway is cofactor biosynthesis; coenzyme A biosynthesis; CoA from (R)-pantothenate: step 3/5. Its function is as follows. Catalyzes two sequential steps in the biosynthesis of coenzyme A. In the first step cysteine is conjugated to 4'-phosphopantothenate to form 4-phosphopantothenoylcysteine. In the second step the latter compound is decarboxylated to form 4'-phosphopantotheine. The sequence is that of Coenzyme A biosynthesis bifunctional protein CoaBC from Vibrio parahaemolyticus serotype O3:K6 (strain RIMD 2210633).